Consider the following 1090-residue polypeptide: MMSFGSADALLGAPFAPLHGGGSLHYSLSRKAGPGGTRSAAGSSSGFHSWARTSVSSVSASPSRFRGAASSTDSLDTLSNGPEGCVVAAVAARSEKEQLQALNDRFAGYIDKVRQLEAHNRSLEGEAAALRQQQAGRAAMGELYEREVREMRGAVLRLGAARGQLRLEQEHLLEDIAHVRQRLDEEARQREEAEAAARALARFAQEAEAARVELQKKAQALQEECGYLRRHHQEEVGELLGQIQGCGAAQAQAQAEARDALKCDVTSALREIRAQLEGHAVQSTLQSEEWFRVRLDRLSEAAKVNTDAMRSAQEEITEYRRQLQARTTELEALKSTKESLERQRSELEDRHQADIASYQDAIQQLDSELRNTKWEMAAQLREYQDLLNVKMALDIEIAAYRKLLEGEECRIGFGPSPFSLTEGLPKIPSISTHIKVKSEEMIKVVEKSEKETVIVEGQTEEIRVTEGVTEEEDKEAQGQEGEEAEEGEEKEEEEGAAATSPPAEEAASPEKETKSRVKEEAKSPGEAKSPGEAKSPAEAKSPGEAKSPGEAKSPGEAKSPAEPKSPAEPKSPAEAKSPAEPKSPATVKSPGEAKSPSEAKSPAEAKSPAEAKSPAEAKSPAEAKSPAEAKSPAEAKSPATVKSPGEAKSPSEAKSPAEAKSPAEAKSPAEAKSPAEVKSPGEAKSPAEPKSPAEAKSPAEVKSPAEAKSPAEVKSPGEAKSPAAVKSPAEAKSPAAVKSPGEAKSPGEAKSPAEAKSPAEAKSPIEVKSPEKAKTPVKEGAKSPAEAKSPEKAKSPVKEDIKPPAEAKSPEKAKSPVKEGAKPPEKAKPLDVKSPEAQTPVQEEAKHPTDIRPPEQVKSPAKEKAKSPEKEEAKTSEKVAPKKEEVKSPVKEEVKAKEPPKKVEEEKTLPTPKTEAKESKKDEAPKEAPKPKVEEKKETPTEKPKDSTAEAKKEEAGEKKKAVASEEETPAKLGVKEEAKPKEKTETTKTEAEDTKAKEPSKPTETEKPKKEEMPAAPEKKDTKEEKTTESRKPEEKPKMEAKVKEDDKSLSKEPSKPKTEKAEKSSSTDQKESQPPEKTTEDKATKGEK.

Positions 2 to 98 (MSFGSADALL…AVAARSEKEQ (97 aa)) are head. A phosphoserine mark is found at Ser-74 and Ser-122. One can recognise an IF rod domain in the interval 95 to 411 (EKEQLQALND…KLLEGEECRI (317 aa)). The interval 99 to 130 (LQALNDRFAGYIDKVRQLEAHNRSLEGEAAAL) is coil 1A. Residues 131–143 (RQQQAGRAAMGEL) are linker 1. Positions 144 to 242 (YEREVREMRG…QEEVGELLGQ (99 aa)) are coil 1B. A linker 12 region spans residues 243–264 (IQGCGAAQAQAQAEARDALKCD). The coil 2A stretch occupies residues 265–286 (VTSALREIRAQLEGHAVQSTLQ). A linker 2 region spans residues 287 to 290 (SEEW). Residues 291–411 (FRVRLDRLSE…KLLEGEECRI (121 aa)) are coil 2B. 3 positions are modified to phosphoserine: Ser-345, Ser-416, and Ser-419. The segment at 412 to 1090 (GFGPSPFSLT…TEDKATKGEK (679 aa)) is tail. Positions 456–1090 (EGQTEEIRVT…TEDKATKGEK (635 aa)) are disordered. Residues 468–495 (VTEEEDKEAQGQEGEEAEEGEEKEEEEG) are compositionally biased toward acidic residues. Residues 496 to 506 (AAATSPPAEEA) are compositionally biased toward low complexity. 43 positions are modified to phosphoserine: Ser-508, Ser-523, Ser-529, Ser-535, Ser-541, Ser-547, Ser-553, Ser-559, Ser-565, Ser-571, Ser-577, Ser-583, Ser-589, Ser-595, Ser-601, Ser-607, Ser-613, Ser-619, Ser-625, Ser-631, Ser-637, Ser-643, Ser-649, Ser-655, Ser-661, Ser-667, Ser-673, Ser-679, Ser-685, Ser-691, Ser-697, Ser-703, Ser-709, Ser-715, Ser-721, Ser-727, Ser-733, Ser-739, Ser-745, Ser-751, Ser-757, Ser-763, and Ser-769. The span at 508 to 579 (SPEKETKSRV…KSPAEAKSPA (72 aa)) shows a compositional bias: basic and acidic residues. 42 tandem repeats follow at residues 522-527 (KSPGEA), 528-533 (KSPGEA), 534-539 (KSPAEA), 540-545 (KSPGEA), 546-551 (KSPGEA), 552-557 (KSPGEA), 558-563 (KSPAEP), 564-569 (KSPAEP), 570-575 (KSPAEA), 576-581 (KSPAEP), 582-587 (KSPATV), 588-593 (KSPGEA), 594-599 (KSPSEA), 600-605 (KSPAEA), 606-611 (KSPAEA), 612-617 (KSPAEA), 618-623 (KSPAEA), 624-629 (KSPAEA), 630-635 (KSPAEA), 636-641 (KSPATV), 642-647 (KSPGEA), 648-653 (KSPSEA), 654-659 (KSPAEA), 660-665 (KSPAEA), 666-671 (KSPAEA), 672-677 (KSPAEV), 678-683 (KSPGEA), 684-689 (KSPAEP), 690-695 (KSPAEA), 696-701 (KSPAEV), 702-707 (KSPAEA), 708-713 (KSPAEV), 714-719 (KSPGEA), 720-725 (KSPAAV), 726-731 (KSPAEA), 732-737 (KSPAAV), 738-743 (KSPGEA), 744-749 (KSPGEA), 750-755 (KSPAEA), 756-761 (KSPAEA), 762-767 (KSPIEV), and 768-773 (KSPEKA). The 52 X 6 AA approximate tandem repeats of K-S-P-[AGISV]-[EATK]-[APVQ] stretch occupies residues 522-892 (KSPGEAKSPG…KEEVKSPVKE (371 aa)). The segment covering 595 to 633 (SPSEAKSPAEAKSPAEAKSPAEAKSPAEAKSPAEAKSPA) has biased composition (basic and acidic residues). Over residues 649-717 (SPSEAKSPAE…KSPAEVKSPG (69 aa)) the composition is skewed to basic and acidic residues. Over residues 745–781 (SPGEAKSPAEAKSPAEAKSPIEVKSPEKAKTPVKEGA) the composition is skewed to basic and acidic residues. Residues 774 to 779 (KTPVKE) form a 43; approximate repeat. 6 tandem repeats follow at residues 782–787 (KSPAEA), 788–793 (KSPEKA), 794–799 (KSPVKE), 808–813 (KSPEKA), 814–819 (KSPVKE), and 833–838 (KSPEAQ). Phosphoserine occurs at positions 783, 789, 795, 809, 815, and 834. Residues 788 to 834 (KSPEKAKSPVKEDIKPPAEAKSPEKAKSPVKEGAKPPEKAKPLDVKS) are compositionally biased toward basic and acidic residues. Residue Thr-839 is modified to Phosphothreonine. Basic and acidic residues-rich tracts occupy residues 843 to 964 (EEAK…KAVA) and 974 to 1090 (GVKE…KGEK). 3 repeat units span residues 858 to 863 (KSPAKE), 866 to 871 (KSPEKE), and 887 to 892 (KSPVKE). Phosphoserine is present on residues Ser-859, Ser-867, Ser-888, and Ser-947.

This sequence belongs to the intermediate filament family. In terms of assembly, forms heterodimers with NEFL; which can further hetero-oligomerize (in vitro). Forms heterodimers with INA (in vitro). In terms of processing, there are a number of repeats of the tripeptide K-S-P, NFH is phosphorylated on a number of the serines in this motif. It is thought that phosphorylation of NFH results in the formation of interfilament cross bridges that are important in the maintenance of axonal caliber. Phosphorylation seems to play a major role in the functioning of the larger neurofilament polypeptides (NF-M and NF-H), the levels of phosphorylation being altered developmentally and coincidentally with a change in the neurofilament function. Post-translationally, phosphorylated in the head and rod regions by the PKC kinase PKN1, leading to the inhibition of polymerization. In terms of tissue distribution, expressed in the sciatic nerve (at protein level).

The protein resides in the cytoplasm. The protein localises to the cytoskeleton. Its subcellular location is the cell projection. It is found in the axon. Functionally, neurofilaments usually contain three intermediate filament proteins: NEFL, NEFM, and NEFH which are involved in the maintenance of neuronal caliber. NEFH has an important function in mature axons that is not subserved by the two smaller NF proteins. May additionally cooperate with the neuronal intermediate filament proteins PRPH and INA to form neuronal filamentous networks. In Mus musculus (Mouse), this protein is Neurofilament heavy polypeptide (Nefh).